The primary structure comprises 427 residues: Peptidase B (427 aa).

Residues Lys-195 and Asp-200 each contribute to the Mn(2+) site. Lys-207 is an active-site residue. The Mn(2+) site is built by Asp-218, Asp-277, and Glu-279. The active site involves Arg-281.

It belongs to the peptidase M17 family. As to quaternary structure, homohexamer. Requires Mn(2+) as cofactor.

The protein resides in the cytoplasm. The catalysed reaction is Release of an N-terminal amino acid, Xaa, from a peptide or arylamide. Xaa is preferably Glu or Asp but may be other amino acids, including Leu, Met, His, Cys and Gln.. In terms of biological role, probably plays an important role in intracellular peptide degradation. In Citrobacter koseri (strain ATCC BAA-895 / CDC 4225-83 / SGSC4696), this protein is Peptidase B.